The primary structure comprises 338 residues: Malate dehydrogenase, mitochondrial (338 aa).

The transit peptide at 1-24 (MLSALARPASAALRRSFSTSAQNN) directs the protein to the mitochondrion. NAD(+) is bound by residues 31 to 37 (GASGGIG) and D57. S33 is a glycosylation site (O-linked (GlcNAc) serine). Residues K78 and K91 each carry the N6-acetyllysine; alternate modification. K78 and K91 each carry N6-succinyllysine; alternate. Substrate-binding residues include R104 and R110. Residues N117 and 140 to 142 (IAN) contribute to the NAD(+) site. Substrate is bound at residue N142. N6-acetyllysine is present on K165. R176 is a binding site for substrate. K185 carries the N6-acetyllysine; alternate modification. K185 carries the post-translational modification N6-succinyllysine; alternate. Catalysis depends on H200, which acts as the Proton acceptor. An N6-succinyllysine modification is found at K203. N6-acetyllysine; alternate occurs at positions 215 and 239. N6-succinyllysine; alternate occurs at positions 215 and 239. The residue at position 239 (K239) is an N6-malonyllysine; alternate. Phosphoserine is present on S246. NAD(+) is bound at residue M251. Residue K269 is modified to N6-succinyllysine. 4 positions are modified to N6-acetyllysine; alternate: K296, K301, K314, and K324. An N6-succinyllysine; alternate mark is found at K296, K301, K314, and K324. Phosphoserine is present on S326. N6-acetyllysine; alternate occurs at positions 328, 329, and 335. K328 is subject to N6-succinyllysine; alternate. K329 carries the N6-malonyllysine; alternate modification. Position 335 is an N6-succinyllysine; alternate (K335).

Belongs to the LDH/MDH superfamily. MDH type 1 family. In terms of assembly, homodimer. Acetylation is enhanced after treatment either with trichostin A (TCA) or with nicotinamide (NAM) with the appearance of tri- and tetraacetylations. Glucose also increases acetylation.

Its subcellular location is the mitochondrion matrix. The enzyme catalyses (S)-malate + NAD(+) = oxaloacetate + NADH + H(+). Enzyme activity is enhanced by acetylation. In Macaca fascicularis (Crab-eating macaque), this protein is Malate dehydrogenase, mitochondrial (MDH2).